Here is a 222-residue protein sequence, read N- to C-terminus: N-(5'-phosphoribosyl)anthranilate isomerase (222 aa).

This sequence belongs to the TrpF family.

It catalyses the reaction N-(5-phospho-beta-D-ribosyl)anthranilate = 1-(2-carboxyphenylamino)-1-deoxy-D-ribulose 5-phosphate. Its pathway is amino-acid biosynthesis; L-tryptophan biosynthesis; L-tryptophan from chorismate: step 3/5. This Brevibacillus brevis (strain 47 / JCM 6285 / NBRC 100599) protein is N-(5'-phosphoribosyl)anthranilate isomerase.